The primary structure comprises 625 residues: Probable potassium transport system protein Kup 1 (625 aa).

Helical transmembrane passes span 14–34, 50–70, 104–124, 139–159, 170–190, 213–233, 249–269, 287–307, 339–359, 368–388, 396–416, and 421–441; these read LSLLALSALGIVFGDIGTSPL, AAAVLGALSLVIWTLFIITTV, IVALGLFGAALIYGDGAITPA, PALQPYVVPAAVVILLALFAI, LFGPVMLLWFVTIAVLGLVGI, GATGFLVLGSVFLCVTGAEAL, WFAVVFPSLIINYAGQAALVI, LLLPLIGLATLATIIASQSVI, IYVGAVNWLLMLVTVSLTIGF, AYGIAVSLTMLMTSALLFIAM, LLAAGAVAGVFLTIDSAFFLA, and IAEGGYVPLLLATSVYGLMWI.

Belongs to the HAK/KUP transporter (TC 2.A.72) family.

The protein localises to the cell inner membrane. The catalysed reaction is K(+)(in) + H(+)(in) = K(+)(out) + H(+)(out). Functionally, transport of potassium into the cell. Likely operates as a K(+):H(+) symporter. The protein is Probable potassium transport system protein Kup 1 of Bradyrhizobium sp. (strain ORS 278).